The chain runs to 352 residues: Heat-inducible transcription repressor HrcA (352 aa).

It belongs to the HrcA family.

In terms of biological role, negative regulator of class I heat shock genes (grpE-dnaK-dnaJ and groELS operons). Prevents heat-shock induction of these operons. This Thermosynechococcus vestitus (strain NIES-2133 / IAM M-273 / BP-1) protein is Heat-inducible transcription repressor HrcA.